Consider the following 451-residue polypeptide: Rab GDP-dissociation inhibitor (451 aa).

Interaction with YPT1 stretches follow at residues 106-112 and 234-259; these read RYVDFKQ and YPMY…TYML.

It belongs to the Rab GDI family. Interacts with the GDP-bound form of Rab GTPase YPT1. Interacts with YPT10.

Its subcellular location is the cytoplasm. Regulates the GDP/GTP exchange reaction of SEC4 by inhibiting the dissociation of GDP from it, and the subsequent binding of GTP to SEC4. Plays an essential role in the yeast secretory pathway. Extracts GDP-bound YPT7 from vacuolar membranes, antagonizing vacuolar membrane fusion. This is Rab GDP-dissociation inhibitor (GDI1) from Saccharomyces cerevisiae (strain ATCC 204508 / S288c) (Baker's yeast).